The chain runs to 405 residues: tRNA (uracil(54)-C(5))-methyltransferase (405 aa).

4 residues coordinate [4Fe-4S] cluster: Cys61, Cys67, Cys70, and Cys137. S-adenosyl-L-methionine is bound by residues Gln252, Tyr278, Thr283, 299 to 300 (DS), Asp326, and Asp340. Cys367 functions as the Nucleophile in the catalytic mechanism. Glu399 (proton acceptor) is an active-site residue.

Belongs to the class I-like SAM-binding methyltransferase superfamily. RNA M5U methyltransferase family.

The enzyme catalyses uridine(54) in tRNA + S-adenosyl-L-methionine = 5-methyluridine(54) in tRNA + S-adenosyl-L-homocysteine + H(+). With respect to regulation, activated by magnesium ions. Its function is as follows. Catalyzes the formation of 5-methyl-uridine at position 54 (m5U54) in tRNA. The sequence is that of tRNA (uracil(54)-C(5))-methyltransferase from Pyrococcus abyssi (strain GE5 / Orsay).